Here is a 207-residue protein sequence, read N- to C-terminus: Zinc finger protein 487 (207 aa).

The region spanning 1–43 (MLENYSLLLSVGYCITKPEVVCKLEHGQVLWILEEESPSQSHL) is the KRAB domain. The C2H2-type; atypical zinc-finger motif lies at 177–202 (KQCFEYNQCGKAFHEEAACSTHKRVC).

It belongs to the krueppel C2H2-type zinc-finger protein family.

Its subcellular location is the nucleus. In terms of biological role, may be involved in transcriptional regulation. This Homo sapiens (Human) protein is Zinc finger protein 487 (ZNF487).